A 412-amino-acid chain; its full sequence is Candidapepsin-2 (412 aa).

A signal peptide (or 18, or 21) is located at residues 1 to 25; that stretch reads MTTIAIFTKNVLLAIAFALFAQGAA. A propeptide spans 26–61 (activation peptide); sequence IPDPAKRDDNPGFVALDFEVTRKPLDVNATSELSKR. N-linked (GlcNAc...) asparagine glycosylation is present at Asn53. The region spanning 75 to 383 is the Peptidase A1 domain; sequence YGIRVSVGSN…LDKETVLSRS (309 aa). The active site involves Asp93. An intrachain disulfide couples Cys108 to Cys113. Asp273 is a catalytic residue. A disulfide bridge links Cys311 with Cys345.

The protein belongs to the peptidase A1 family. Post-translationally, O-glycosylated.

It is found in the secreted. The catalysed reaction is Preferential cleavage at the carboxyl of hydrophobic amino acids, but fails to cleave 15-Leu-|-Tyr-16, 16-Tyr-|-Leu-17 and 24-Phe-|-Phe-25 of insulin B chain. Activates trypsinogen, and degrades keratin.. In Candida parapsilosis (Yeast), this protein is Candidapepsin-2 (SAPP2).